The chain runs to 330 residues: Taste receptor type 2 member 136 (330 aa).

The Extracellular segment spans residues Met1–Ala32. Residues Gly33–Val53 traverse the membrane as a helical segment. The Cytoplasmic portion of the chain corresponds to Thr54–Ser73. The helical transmembrane segment at Leu74–Phe94 threads the bilayer. Over His95–Thr122 the chain is Extracellular. The chain crosses the membrane as a helical span at residues Ile123 to Leu143. The Cytoplasmic portion of the chain corresponds to Lys144–Ser149. The helical transmembrane segment at Val150–Thr170 threads the bilayer. The Extracellular portion of the chain corresponds to Val171–Ser201. Residues Asn183 and Asn195 are each glycosylated (N-linked (GlcNAc...) asparagine). Residues Phe202–Tyr222 form a helical membrane-spanning segment. The Cytoplasmic portion of the chain corresponds to Ser223–Lys248. A helical transmembrane segment spans residues Ala249 to Ile269. The Extracellular portion of the chain corresponds to Ser270–His283. A helical membrane pass occupies residues Leu284 to Gly304. Residues Asn305–Pro330 lie on the Cytoplasmic side of the membrane.

Belongs to the G-protein coupled receptor T2R family.

It is found in the membrane. Its function is as follows. Putative taste receptor which may play a role in the perception of bitterness. This Rattus norvegicus (Rat) protein is Taste receptor type 2 member 136.